We begin with the raw amino-acid sequence, 109 residues long: Hainantoxin-XVIII-4 (109 aa).

Positions methionine 1–alanine 18 are cleaved as a signal peptide. A propeptide spanning residues phenylalanine 19–alanine 46 is cleaved from the precursor. 3 disulfides stabilise this stretch: cysteine 55-cysteine 68, cysteine 59-cysteine 108, and cysteine 61-cysteine 81.

This sequence belongs to the neurotoxin 25 family. F7 subfamily. As to expression, expressed by the venom gland.

The protein resides in the secreted. In terms of biological role, putative ion channel inhibitor. This Cyriopagopus hainanus (Chinese bird spider) protein is Hainantoxin-XVIII-4.